We begin with the raw amino-acid sequence, 305 residues long: uncharacterized protein (305 aa).

Transmembrane regions (helical) follow at residues 11-31, 37-57, 70-90, 97-117, 126-146, 148-168, 180-200, 217-237, 244-264, and 265-285; these read LLLAFLVIMWGVNWPLSKAAL, LLFAGIRTLIGGLLLVIVALP, IYLVSALLNITLFYGLQTIGL, LFSAIVFFQPVLMGVFSWLWL, VIGLILGFAGVAVISAAGFGG, ISVIGVLLALGSAVSWALGTV, IWMVALQLTIGSVFLLISGFW, LLFISVFVIALGWLVFFTLVG, VASYTFLIPLISIVASSIFLH, and EPLTLSLLAGLLLIVTSICLV. EamA domains lie at 18–141 and 161–287; these read IMWG…VISA and VSWA…LVNT.

It belongs to the EamA transporter family.

Its subcellular location is the cell membrane. This is an uncharacterized protein from Bacillus subtilis (strain 168).